Consider the following 64-residue polypeptide: Drosocin antimicrobial peptides (64 aa).

Positions 1 to 19 (MKFTIVFLLLACVFAMAVA) are cleaved as a signal peptide. Positions 20–21 (TP) are excised as a propeptide. O-linked (GalNAc...) serine glycosylation occurs at S28. T32 carries O-linked (GalNAc...) threonine glycosylation. Positions 32–40 (TSHPRPIRV) are critical for inhibition of translation, possibly due to its role in mediating interactions with bacterial 23S rRNA and peptide chain release factors.

Belongs to the drosocin family. As to quaternary structure, associates with the bacterial 50S ribosomal complex, occupying the nascent peptide exit tunnel. Interacts with bacterial 23S rRNA; this interaction is direct. Interacts with bacterial rplV/50S ribosomal protein L22; this interaction is direct. Interacts with bacterial prfA/peptide chain release factor RF1; while associated with the bacterial 50S ribosomal complex, this interaction is direct and traps RF1 on the ribosome, inhibiting further translation. Proteolytically cleaved at a pair of basic residues corresponding to the RXK/RR optimal cleavage site for furin proteases to produce two distinct antibacterial peptides. Post-translationally, O-glycosylated. O-glycosylation may be required for efficient uptake by target bacterial cells. Monosaccharide modification of Thr-32 provides better antibacterial activity than disaccharide modification or no modification. O-glycosylation of Thr-32 is not essential for antimicrobial activity but enhances this activity by mediating interactions with the 23S rRNA and increasing the efficiency of translation inhibition.

The protein localises to the secreted. Antibacterial peptide with strong anti-Gram-negative bacteria activity. Significantly contributes to antibacterial activity against Enterobacter cloacae but not Providencia burhodogranariea. Inhibitor of bacterial translation machinery that targets translation termination in a prfA- or prfB-dependent manner. Binds within the nascent peptide exit tunnel of the bacterial large ribosomal subunit, potentially interfering with nascent chain translocation that occurs post-peptide bond formation. Binds prfA/RF1 (and potentially prfB/RF2), trapping it on the ribosome after release of the nascent polypeptide chain and preventing further translation. The resulting depletion of peptide chain release factors further disrupts bacterial translation by preventing ribosomal peptide chain release and inducing stop codon readthrough. Entry into target Escherichia coli cells requires the bacterial peptide antibiotic transporter sbmA. In terms of biological role, peptide with significant antibacterial activity against Providencia burhodogranariea but not Enterobacter cloacae. The polypeptide is Drosocin antimicrobial peptides (Dro) (Drosophila simulans (Fruit fly)).